Reading from the N-terminus, the 685-residue chain is DNA ligase (685 aa).

NAD(+) contacts are provided by residues 34-38, 83-84, and E113; these read DAVFD and SL. K115 serves as the catalytic N6-AMP-lysine intermediate. Positions 136, 173, 297, and 321 each coordinate NAD(+). 4 residues coordinate Zn(2+): C415, C418, C433, and C438. The BRCT domain occupies 607–685; that stretch reads QEKLQFSGKT…EQELMTLISN (79 aa).

The protein belongs to the NAD-dependent DNA ligase family. LigA subfamily. The cofactor is Mg(2+). Mn(2+) serves as cofactor.

It catalyses the reaction NAD(+) + (deoxyribonucleotide)n-3'-hydroxyl + 5'-phospho-(deoxyribonucleotide)m = (deoxyribonucleotide)n+m + AMP + beta-nicotinamide D-nucleotide.. Its function is as follows. DNA ligase that catalyzes the formation of phosphodiester linkages between 5'-phosphoryl and 3'-hydroxyl groups in double-stranded DNA using NAD as a coenzyme and as the energy source for the reaction. It is essential for DNA replication and repair of damaged DNA. This is DNA ligase from Prochlorococcus marinus (strain SARG / CCMP1375 / SS120).